The following is a 3172-amino-acid chain: Erythronolide synthase EryA3 (3172 aa).

The region spanning 38 to 452 (GEPIAIVGMA…GTNAHVIVEE (415 aa)) is the Ketosynthase family 3 (KS3) 1 domain. Module regions lie at residues 41–1464 (IAIV…DHYL) and 1492–2891 (IAIV…DHIG). The active-site Acyl-thioester intermediate; for beta-ketoacyl synthase 1 activity is the Cys199. Active-site for beta-ketoacyl synthase 1 activity residues include His334 and His374. The interval 557 to 874 (VFPGQGAQWQ…LGEAYAQGVE (318 aa)) is acyltransferase 1. Ser643 acts as the Acyl-ester intermediate; for acyltransferase 1 activity in catalysis. Positions 1117 to 1294 (GTVLVTGGTG…VTSIAWGLWA (178 aa)) are beta-ketoacyl reductase 1. Residues 1125–1128 (TGGI), 1148–1151 (GRRG), 1177–1178 (DV), Lys1229, and 1249–1250 (FS) contribute to the NADP(+) site. The active-site Acyl-ester intermediate; for beta-ketoacyl reductase 1 activity is Tyr1264. A Carrier 1 domain is found at 1392-1467 (EHLAHLIRAE…RLADHYLERL (76 aa)). An O-(pantetheine 4'-phosphoryl)serine modification is found at Ser1427. Positions 1489–1916 (DDPIAIVGMA…GTNAHVIIAE (428 aa)) constitute a Ketosynthase family 3 (KS3) 2 domain. Cys1661 serves as the catalytic Acyl-thioester intermediate; for beta-ketoacyl synthase 2 activity. Active-site for beta-ketoacyl synthase 2 activity residues include His1797 and His1837. The acyltransferase 2 stretch occupies residues 2022–2331 (VFVFPGQGAQ…LARAHVHGVA (310 aa)). Catalysis depends on Ser2112, which acts as the Acyl-ester intermediate; for acyltransferase 2 activity. The tract at residues 2557–2731 (GTALVTGGTG…ATSVAWGAWA (175 aa)) is beta-ketoacyl reductase 2. NADP(+) contacts are provided by residues 2565-2568 (TGAL), 2588-2591 (SRRG), 2617-2618 (DV), Lys2666, and 2686-2687 (FS). Tyr2701 acts as the Acyl-ester intermediate; for beta-ketoacyl reductase 2 activity in catalysis. The 76-residue stretch at 2819-2894 (QELLEFTHSH…RLADHIGQQL (76 aa)) folds into the Carrier 2 domain. Ser2854 carries the post-translational modification O-(pantetheine 4'-phosphoryl)serine. Residues 2960 to 3166 (ICCAGTAAIS…DAIARHIDAW (207 aa)) are thioesterase. A substrate-binding site is contributed by Thr2965. Catalysis depends on Ser3031, which acts as the Nucleophile; for thioesterase activity. Residues Ala3032 and Asp3058 each contribute to the substrate site. The active-site Proton acceptor; for thioesterase activity is His3148.

Homodimer. Erythronolide synthase is composed of EryAI, EryAII and EryAIII multimodular (2 modules) polypeptides each coding for a functional synthase subunit which participates in 2 of the six FAS-like elongation steps required for formation of the polyketide. Module 1, 2, 3, 4, 5, and 6 participating in biosynthesis steps 1, 2, 3, 4, 5, and 6, respectively. It depends on pantetheine 4'-phosphate as a cofactor.

The catalysed reaction is 6 (S)-methylmalonyl-CoA + propanoyl-CoA + 6 NADPH + 12 H(+) = 6-deoxyerythronolide B + 6 CO2 + 6 NADP(+) + 7 CoA + H2O. It participates in antibiotic biosynthesis; erythromycin biosynthesis. With respect to regulation, inhibited by diphenyl phosphonates derivatives such as diphenyl allylphosphonate. In terms of biological role, involved in the biosynthesis of antibiotic erythromycin via the biosynthesis of its aglycone precursor, 6-deoxyerythronolide B (6-dEB). The protein is Erythronolide synthase EryA3 of Saccharopolyspora erythraea (Streptomyces erythraeus).